A 437-amino-acid polypeptide reads, in one-letter code: Leucine-rich repeat flightless-interacting protein 2 (437 aa).

At S18 the chain carries Phosphoserine. A coiled-coil region spans residues 22–49; sequence EALSNIAREAEARLAAKRAARAEARDIR. A compositionally biased stretch (basic and acidic residues) spans 33–62; sequence ARLAAKRAARAEARDIRMRELERQQRESSS. The disordered stretch occupies residues 33-152; sequence ARLAAKRAAR…DTSLSELRES (120 aa). A compositionally biased stretch (polar residues) spans 63–74; the sequence is KDITGTHWSRAS. Residues 77–105 show a composition bias toward basic and acidic residues; the sequence is KRRDMMYDSIKDRSSRVSSLLDEKSDKQY. The span at 110–139 shows a compositional bias: polar residues; sequence TRPSSRNSASATTPLSGNSSRRGSGDTSSL. 5 positions are modified to phosphoserine: S114, S117, S125, S129, and S133. T136 is modified (phosphothreonine). 2 positions are modified to phosphoserine: S137 and S138. 2 coiled-coil regions span residues 143–239 and 282–430; these read DTSL…LIEK and LDVR…KANR.

It belongs to the LRRFIP family. As to quaternary structure, interacts with DVL3 and FLII. Weakly interacts with MYD88 in resting cells. Following LPS-stimulation, the interaction with MYD88 is rapidly enhanced; the complex gradually dissociates to basal levels after 6 hours of stimulation. Interaction with MYD88 is regulated by LPS-induced phosphorylation. In the presence of LPS, competes with FLII for MYD88-binding.

Its function is as follows. May function as activator of the canonical Wnt signaling pathway, in association with DVL3, upstream of CTNNB1/beta-catenin. Positively regulates Toll-like receptor (TLR) signaling in response to agonist probably by competing with the negative FLII regulator for MYD88-binding. This Rattus norvegicus (Rat) protein is Leucine-rich repeat flightless-interacting protein 2 (Lrrfip2).